The chain runs to 252 residues: Glycine-rich cell wall structural protein 1.0 (252 aa).

A signal peptide spans 1 to 30; the sequence is MATSKVLLSNVLFVFVCFGICSAARTLLTL. Residues 231 to 252 form a disordered region; sequence GSGYGGGGGSGEGGGHGGGYYP.

Expressed in young hypocotyls.

Its subcellular location is the secreted. It is found in the cell wall. Responsible for plasticity of the cell wall. The sequence is that of Glycine-rich cell wall structural protein 1.0 from Phaseolus vulgaris (Kidney bean).